The chain runs to 671 residues: DNA ligase (671 aa).

NAD(+) contacts are provided by residues 32–36 (DAEYD), 81–82 (SL), and Glu-113. Lys-115 serves as the catalytic N6-AMP-lysine intermediate. NAD(+) is bound by residues Arg-136, Glu-173, Lys-290, and Lys-314. Zn(2+) is bound by residues Cys-408, Cys-411, Cys-426, and Cys-432. A BRCT domain is found at 593–671 (EIDSPFAGKT…EAEMLRLLGS (79 aa)).

This sequence belongs to the NAD-dependent DNA ligase family. LigA subfamily. Requires Mg(2+) as cofactor. Mn(2+) serves as cofactor.

The catalysed reaction is NAD(+) + (deoxyribonucleotide)n-3'-hydroxyl + 5'-phospho-(deoxyribonucleotide)m = (deoxyribonucleotide)n+m + AMP + beta-nicotinamide D-nucleotide.. Its function is as follows. DNA ligase that catalyzes the formation of phosphodiester linkages between 5'-phosphoryl and 3'-hydroxyl groups in double-stranded DNA using NAD as a coenzyme and as the energy source for the reaction. It is essential for DNA replication and repair of damaged DNA. This Escherichia coli O7:K1 (strain IAI39 / ExPEC) protein is DNA ligase.